Here is a 118-residue protein sequence, read N- to C-terminus: Large ribosomal subunit protein bL20 (118 aa).

Belongs to the bacterial ribosomal protein bL20 family.

In terms of biological role, binds directly to 23S ribosomal RNA and is necessary for the in vitro assembly process of the 50S ribosomal subunit. It is not involved in the protein synthesizing functions of that subunit. This Francisella philomiragia subsp. philomiragia (strain ATCC 25017 / CCUG 19701 / FSC 153 / O#319-036) protein is Large ribosomal subunit protein bL20.